The sequence spans 505 residues: Trans-cinnamate 4-monooxygenase (505 aa).

A helical transmembrane segment spans residues 3-23 (LLLLEKTLLGSFVAILVAILV). Residues 213–218 (RSRLAQ) and A306 contribute to the (E)-cinnamate site. C447 provides a ligand contact to heme.

It belongs to the cytochrome P450 family. It depends on heme as a cofactor.

It is found in the membrane. The catalysed reaction is (E)-cinnamate + reduced [NADPH--hemoprotein reductase] + O2 = (E)-4-coumarate + oxidized [NADPH--hemoprotein reductase] + H2O + H(+). It participates in phenylpropanoid metabolism; trans-4-coumarate biosynthesis; trans-4-coumarate from trans-cinnamate: step 1/1. In terms of biological role, catalyzes the first oxidative step of the phenylpropanoid pathway in higher plants by transforming trans-cinnamate into p-coumarate. The compounds formed by this pathway are essential components for lignification, pollination, and defense against ultraviolet light, predators and pathogens. In Populus tremuloides (Quaking aspen), this protein is Trans-cinnamate 4-monooxygenase (CYP73A13).